The primary structure comprises 204 residues: phospholipase A2 inhibitor and Ly6/PLAUR domain-containing protein (204 aa).

Residues 1–26 (MRLSRRPETFLLAFVLLCTLLGLGCP) form the signal peptide. The region spanning 27 to 117 (LHCEICTAAG…NSAFLSVPLT (91 aa)) is the UPAR/Ly6 domain. Disulfide bonds link C29-C53, C32-C39, C46-C74, C80-C101, C102-C107, C126-C151, and C144-C172.

The protein belongs to the CNF-like-inhibitor family.

It localises to the secreted. The protein is phospholipase A2 inhibitor and Ly6/PLAUR domain-containing protein (PINLYP) of Homo sapiens (Human).